A 727-amino-acid chain; its full sequence is NADH-ubiquinone oxidoreductase 75 kDa subunit, mitochondrial (727 aa).

A mitochondrion-targeting transit peptide spans Met1 to Thr23. In terms of domain architecture, 2Fe-2S ferredoxin-type spans Asn30–Lys108. 3 residues coordinate [2Fe-2S] cluster: Cys64, Cys75, and Cys78. Residue Lys84 is modified to N6-acetyllysine. Cys92 is a [2Fe-2S] cluster binding site. The 4Fe-4S His(Cys)3-ligated-type domain maps to Lys108–Gly147. [4Fe-4S] cluster-binding residues include His124, Cys128, Cys131, Cys137, Cys176, Cys179, Cys182, and Cys226. The 4Fe-4S Mo/W bis-MGD-type domain maps to Thr245–Arg301. An N6-acetyllysine mark is found at Lys467, Lys499, and Lys709.

Belongs to the complex I 75 kDa subunit family. In terms of assembly, core subunit of respiratory chain NADH dehydrogenase (Complex I) which is composed of 45 different subunits. This is the largest subunit of complex I and it is a component of the iron-sulfur (IP) fragment of the enzyme. Complex I associates with ubiquinol-cytochrome reductase complex (Complex III) to form supercomplexes. Interacts with MDM2 and AKAP1. [2Fe-2S] cluster is required as a cofactor. Requires [4Fe-4S] cluster as cofactor.

The protein resides in the mitochondrion inner membrane. The catalysed reaction is a ubiquinone + NADH + 5 H(+)(in) = a ubiquinol + NAD(+) + 4 H(+)(out). Core subunit of the mitochondrial membrane respiratory chain NADH dehydrogenase (Complex I) which catalyzes electron transfer from NADH through the respiratory chain, using ubiquinone as an electron acceptor. Essential for catalysing the entry and efficient transfer of electrons within complex I. Plays a key role in the assembly and stability of complex I and participates in the association of complex I with ubiquinol-cytochrome reductase complex (Complex III) to form supercomplexes. The protein is NADH-ubiquinone oxidoreductase 75 kDa subunit, mitochondrial (NDUFS1) of Macaca fascicularis (Crab-eating macaque).